The following is a 160-amino-acid chain: 6,7-dimethyl-8-ribityllumazine synthase (160 aa).

5-amino-6-(D-ribitylamino)uracil-binding positions include Trp28, 59–61, and 81–83; these read ALE and CVI. 86-87 contributes to the (2S)-2-hydroxy-3-oxobutyl phosphate binding site; that stretch reads ET. His89 acts as the Proton donor in catalysis. Residue Asn114 participates in 5-amino-6-(D-ribitylamino)uracil binding. Arg128 is a (2S)-2-hydroxy-3-oxobutyl phosphate binding site.

The protein belongs to the DMRL synthase family.

It carries out the reaction (2S)-2-hydroxy-3-oxobutyl phosphate + 5-amino-6-(D-ribitylamino)uracil = 6,7-dimethyl-8-(1-D-ribityl)lumazine + phosphate + 2 H2O + H(+). The protein operates within cofactor biosynthesis; riboflavin biosynthesis; riboflavin from 2-hydroxy-3-oxobutyl phosphate and 5-amino-6-(D-ribitylamino)uracil: step 1/2. Its function is as follows. Catalyzes the formation of 6,7-dimethyl-8-ribityllumazine by condensation of 5-amino-6-(D-ribitylamino)uracil with 3,4-dihydroxy-2-butanone 4-phosphate. This is the penultimate step in the biosynthesis of riboflavin. This chain is 6,7-dimethyl-8-ribityllumazine synthase, found in Corynebacterium urealyticum (strain ATCC 43042 / DSM 7109).